The following is a 147-amino-acid chain: Nucleoside diphosphate kinase (147 aa).

The ATP site is built by lysine 9, phenylalanine 57, arginine 85, threonine 91, arginine 102, and asparagine 112. Histidine 115 (pros-phosphohistidine intermediate) is an active-site residue.

The protein belongs to the NDK family. In terms of assembly, homotetramer. It depends on Mg(2+) as a cofactor.

Its subcellular location is the cytoplasm. The catalysed reaction is a 2'-deoxyribonucleoside 5'-diphosphate + ATP = a 2'-deoxyribonucleoside 5'-triphosphate + ADP. The enzyme catalyses a ribonucleoside 5'-diphosphate + ATP = a ribonucleoside 5'-triphosphate + ADP. Major role in the synthesis of nucleoside triphosphates other than ATP. The ATP gamma phosphate is transferred to the NDP beta phosphate via a ping-pong mechanism, using a phosphorylated active-site intermediate. This is Nucleoside diphosphate kinase from Listeria monocytogenes serotype 4b (strain CLIP80459).